The sequence spans 391 residues: Probable FAD-dependent oxidoreductase PA4991 (391 aa).

FAD-binding positions include Ala-17, Glu-36, 44–45, 49–51, and 346–347; these read QS, QGI, and LA.

The protein belongs to the DAO family. As to quaternary structure, monomer. The cofactor is FAD.

Probably functions as a FAD-dependent oxidoreductase, whose physiological substrate is unknown. Does not display amino-acid oxidase or glycerol-3-phosphate dehydrogenase activities. Is essential for growth of P.aeruginosa in the sputum of cystic fibrosis patients. The polypeptide is Probable FAD-dependent oxidoreductase PA4991 (Pseudomonas aeruginosa (strain ATCC 15692 / DSM 22644 / CIP 104116 / JCM 14847 / LMG 12228 / 1C / PRS 101 / PAO1)).